A 485-amino-acid polypeptide reads, in one-letter code: Threonine synthase-like 2 (485 aa).

An N6-(pyridoxal phosphate)lysine modification is found at K113.

Belongs to the threonine synthase family. Pyridoxal 5'-phosphate serves as cofactor.

In terms of biological role, acts as a catabolic phospho-lyase on both gamma- and beta-phosphorylated substrates. Degrades O-phospho-threonine (PThr) to alpha-ketobutyrate, ammonia and phosphate. This Rattus norvegicus (Rat) protein is Threonine synthase-like 2 (Thnsl2).